Here is an 860-residue protein sequence, read N- to C-terminus: DNA mismatch repair protein MutS (860 aa).

606–613 (GPNMSGKS) lines the ATP pocket.

Belongs to the DNA mismatch repair MutS family.

Its function is as follows. This protein is involved in the repair of mismatches in DNA. It is possible that it carries out the mismatch recognition step. This protein has a weak ATPase activity. The polypeptide is DNA mismatch repair protein MutS (Geobacillus sp. (strain WCH70)).